A 497-amino-acid polypeptide reads, in one-letter code: uncharacterized protein (497 aa).

Residues 44–74 (IRQEKEMKRHDDDGRQYQSDRKFAKSKHDDI) are compositionally biased toward basic and acidic residues. Disordered stretches follow at residues 44–95 (IRQE…SVGR), 120–151 (VSRS…EHRD), and 195–227 (GNVI…TSAR). Low complexity predominate over residues 120–131 (VSRSSSIGHSGS). Residues S123, S125, and S131 each carry the phosphoserine modification. T132 is modified (phosphothreonine). Positions 213-227 (ASLSRAASNSSTSAR) are enriched in low complexity. A Phosphothreonine modification is found at T258. S310 carries the phosphoserine modification. Polar residues predominate over residues 367 to 385 (NVNPSNQDLASVKQPSGFS). A disordered region spans residues 367–497 (NVNPSNQDLA…GFPDTSRPPH (131 aa)). The segment covering 400–409 (NFSNDDSSFF) has biased composition (low complexity). A Phosphoserine modification is found at S436. The span at 448–472 (GLSSGASIPSAPPGFGYQQPSFPYS) shows a compositional bias: low complexity.

The protein localises to the cytoplasm. The protein resides in the nucleus. This is an uncharacterized protein from Schizosaccharomyces pombe (strain 972 / ATCC 24843) (Fission yeast).